The sequence spans 537 residues: uncharacterized protein (537 aa).

It belongs to the RuBisCO large chain family. Type IV subfamily.

Functionally, unknown. Probably does not have RuBisCO activity. This is an uncharacterized protein from Symbiodinium sp. (Dinoflagellate).